We begin with the raw amino-acid sequence, 240 residues long: Ribonuclease PH (240 aa).

Phosphate is bound by residues Arg87 and 125-127 (GTR).

It belongs to the RNase PH family. As to quaternary structure, homohexameric ring arranged as a trimer of dimers.

It catalyses the reaction tRNA(n+1) + phosphate = tRNA(n) + a ribonucleoside 5'-diphosphate. In terms of biological role, phosphorolytic 3'-5' exoribonuclease that plays an important role in tRNA 3'-end maturation. Removes nucleotide residues following the 3'-CCA terminus of tRNAs; can also add nucleotides to the ends of RNA molecules by using nucleoside diphosphates as substrates, but this may not be physiologically important. Probably plays a role in initiation of 16S rRNA degradation (leading to ribosome degradation) during starvation. This is Ribonuclease PH from Crocosphaera subtropica (strain ATCC 51142 / BH68) (Cyanothece sp. (strain ATCC 51142)).